We begin with the raw amino-acid sequence, 531 residues long: Bifunctional protein TrpGD (531 aa).

Residues 3–196 (DILLLDNIDS…LAWAQQKLEP (194 aa)) form the Glutamine amidotransferase type-1 domain. 57 to 59 (GPG) lines the L-glutamine pocket. The Nucleophile; for GATase activity role is filled by C84. Residues Q88 and 134 to 135 (SL) each bind L-glutamine. Active-site for GATase activity residues include H170 and E172. An anthranilate phosphoribosyltransferase region spans residues 202–531 (PILEKLYQAQ…DRVTALAARG (330 aa)).

This sequence in the C-terminal section; belongs to the anthranilate phosphoribosyltransferase family. In terms of assembly, heterotetramer consisting of two non-identical subunits: a beta subunit (TrpG) and a large alpha subunit (TrpE).

The enzyme catalyses chorismate + L-glutamine = anthranilate + pyruvate + L-glutamate + H(+). The catalysed reaction is N-(5-phospho-beta-D-ribosyl)anthranilate + diphosphate = 5-phospho-alpha-D-ribose 1-diphosphate + anthranilate. Its pathway is amino-acid biosynthesis; L-tryptophan biosynthesis; L-tryptophan from chorismate: step 1/5. It functions in the pathway amino-acid biosynthesis; L-tryptophan biosynthesis; L-tryptophan from chorismate: step 2/5. Its activity is regulated as follows. Cooperatively feedback inhibited by tryptophan. In terms of biological role, part of a heterotetrameric complex that catalyzes the two-step biosynthesis of anthranilate, an intermediate in the biosynthesis of L-tryptophan. In the first step, the glutamine-binding beta subunit (TrpG) of anthranilate synthase (AS) provides the glutamine amidotransferase activity which generates ammonia as a substrate that, along with chorismate, is used in the second step, catalyzed by the large alpha subunit of AS (TrpE) to produce anthranilate. In the absence of TrpG, TrpE can synthesize anthranilate directly from chorismate and high concentrations of ammonia. In addition to synthesizing anthranilate, it also catalyzes the second step of the pathway, the transfer of the phosphoribosyl group of 5-phosphorylribose-1-pyrophosphate (PRPP) to anthranilate. This Escherichia coli (strain K12) protein is Bifunctional protein TrpGD (trpGD).